The chain runs to 155 residues: MSEQNSTEMTFQIQRIYTKDISFEAPNAPQVFQKDWQPEVKLDLDTASTQLAEGVYEVVLRVTVTAALGEETAFLCEVQQGGIFSIDGIEGTQMAHCLGAYCPNILFPYARECITSLVSRGTFPQLNLAPVNFDALFMNYLQQQAGEGAEQHQDA.

Belongs to the SecB family. In terms of assembly, homotetramer, a dimer of dimers. One homotetramer interacts with 1 SecA dimer.

The protein resides in the cytoplasm. Its function is as follows. One of the proteins required for the normal export of preproteins out of the cell cytoplasm. It is a molecular chaperone that binds to a subset of precursor proteins, maintaining them in a translocation-competent state. It also specifically binds to its receptor SecA. This chain is Protein-export protein SecB, found in Klebsiella pneumoniae subsp. pneumoniae (strain ATCC 700721 / MGH 78578).